A 244-amino-acid polypeptide reads, in one-letter code: Geranylgeranylglyceryl phosphate synthase (244 aa).

D20 and S49 together coordinate Mg(2+). Residues 169 to 175 (YLEAGSG), 200 to 201 (GG), and 222 to 223 (GT) each bind sn-glycerol 1-phosphate.

This sequence belongs to the GGGP/HepGP synthase family. Group II subfamily. Mg(2+) serves as cofactor.

It is found in the cytoplasm. It carries out the reaction sn-glycerol 1-phosphate + (2E,6E,10E)-geranylgeranyl diphosphate = sn-3-O-(geranylgeranyl)glycerol 1-phosphate + diphosphate. Its pathway is membrane lipid metabolism; glycerophospholipid metabolism. Functionally, prenyltransferase that catalyzes the transfer of the geranylgeranyl moiety of geranylgeranyl diphosphate (GGPP) to the C3 hydroxyl of sn-glycerol-1-phosphate (G1P). This reaction is the first ether-bond-formation step in the biosynthesis of archaeal membrane lipids. The sequence is that of Geranylgeranylglyceryl phosphate synthase from Korarchaeum cryptofilum (strain OPF8).